A 467-amino-acid chain; its full sequence is Light-independent protochlorophyllide reductase subunit N (467 aa).

[4Fe-4S] cluster is bound by residues C23, C48, and C108.

It belongs to the BchN/ChlN family. As to quaternary structure, protochlorophyllide reductase is composed of three subunits; ChlL, ChlN and ChlB. Forms a heterotetramer of two ChlB and two ChlN subunits. Requires [4Fe-4S] cluster as cofactor.

The catalysed reaction is chlorophyllide a + oxidized 2[4Fe-4S]-[ferredoxin] + 2 ADP + 2 phosphate = protochlorophyllide a + reduced 2[4Fe-4S]-[ferredoxin] + 2 ATP + 2 H2O. The protein operates within porphyrin-containing compound metabolism; chlorophyll biosynthesis (light-independent). In terms of biological role, component of the dark-operative protochlorophyllide reductase (DPOR) that uses Mg-ATP and reduced ferredoxin to reduce ring D of protochlorophyllide (Pchlide) to form chlorophyllide a (Chlide). This reaction is light-independent. The NB-protein (ChlN-ChlB) is the catalytic component of the complex. The sequence is that of Light-independent protochlorophyllide reductase subunit N from Nostoc sp. (strain PCC 7120 / SAG 25.82 / UTEX 2576).